Reading from the N-terminus, the 450-residue chain is 3-keto-steroid reductase erg27 (450 aa).

Leu-25, Thr-53, and Lys-59 together coordinate NADP(+). Residues Ser-215 and Tyr-238 each act as proton donor in the active site. Residues Tyr-238, Lys-242, and Thr-296 each contribute to the NADP(+) site. The active-site Lowers pKa of active site Tyr is the Lys-242.

Belongs to the short-chain dehydrogenases/reductases (SDR) family. ERG27 subfamily. In terms of assembly, heterotetramer of erg25, erg26, erg27 and erg28. Erg28 acts as a scaffold to tether erg27 and other 4,4-demethylation-related enzymes, forming a demethylation enzyme complex, in the endoplasmic reticulum.

The protein resides in the endoplasmic reticulum membrane. It localises to the lipid droplet. The protein operates within steroid metabolism; ergosterol biosynthesis. Functionally, sterol-C4-methyl oxidase; part of the third module of ergosterol biosynthesis pathway that includes the late steps of the pathway. Erg27 is a catalytic component of the C-4 demethylation complex that catalyzes the conversion of 4,4-dimethylfecosterol into fecosterol via 4-methylfecosterol. The third module or late pathway involves the ergosterol synthesis itself through consecutive reactions that mainly occur in the endoplasmic reticulum (ER) membrane. Firstly, the squalene synthase erg9 catalyzes the condensation of 2 farnesyl pyrophosphate moieties to form squalene, which is the precursor of all steroids. Squalene synthase is crucial for balancing the incorporation of farnesyl diphosphate (FPP) into sterol and nonsterol isoprene synthesis. Secondly, squalene is converted into lanosterol by the consecutive action of the squalene epoxidase erg1 and the lanosterol synthase erg7. Then, the delta(24)-sterol C-methyltransferase erg6 methylates lanosterol at C-24 to produce eburicol. Eburicol is the substrate of the sterol 14-alpha demethylase encoded by cyp51A and cyp51B, to yield 4,4,24-trimethyl ergosta-8,14,24(28)-trienol. The C-14 reductase erg24 then reduces the C14=C15 double bond which leads to 4,4-dimethylfecosterol. A sequence of further demethylations at C-4, involving the C-4 demethylation complex containing the C-4 methylsterol oxidases erg25A or erg25B, the sterol-4-alpha-carboxylate 3-dehydrogenase erg26 and the 3-keto-steroid reductase erg27, leads to the production of fecosterol via 4-methylfecosterol. The C-8 sterol isomerase erg2 then catalyzes the reaction which results in unsaturation at C-7 in the B ring of sterols and thus converts fecosterol to episterol. The sterol-C5-desaturase erg3B then catalyzes the introduction of a C-5 double bond in the B ring to produce 5-dehydroepisterol. The 2 other sterol-C5-desaturases, erg3A and erg3C, seem to be less important in ergosterol biosynthesis. The C-22 sterol desaturase erg5 further converts 5-dehydroepisterol into ergosta-5,7,22,24(28)-tetraen-3beta-ol by forming the C-22(23) double bond in the sterol side chain. Finally, ergosta-5,7,22,24(28)-tetraen-3beta-ol is substrate of the C-24(28) sterol reductases erg4A and erg4B to produce ergosterol. Possible alternative sterol biosynthetic pathways might exist from fecosterol to ergosterol, depending on the activities of the erg3 isoforms. The sequence is that of 3-keto-steroid reductase erg27 from Aspergillus fumigatus (strain ATCC MYA-4609 / CBS 101355 / FGSC A1100 / Af293) (Neosartorya fumigata).